Consider the following 489-residue polypeptide: Cytochrome P450 monooxygenase trt6 (489 aa).

A helical membrane pass occupies residues 10–30 (SLWSFGLWILVILSPVLFFAS). 2 N-linked (GlcNAc...) asparagine glycosylation sites follow: N364 and N407. C430 contacts heme.

It belongs to the cytochrome P450 family. Heme serves as cofactor.

It localises to the membrane. The protein operates within secondary metabolite biosynthesis; terpenoid biosynthesis. Its function is as follows. Cytochrome P450 monooxygenase; part of the gene cluster that mediates the biosynthesis of terretonin, a fungal meroterpenoid that acts as a mycotoxin. The first step of the pathway is the synthesis of 3,5-dimethylorsellinic acid (DMOA) by the polyketide synthase trt4. DMOA is then prenylated into farnesyl-DMOA by the polyprenyl transferase trt2. Methylation by the methyltransferase trt5 then leads to farnesyl-DMOA methyl ester which is further subject to epoxidation by the FAD-dependent monooxygenase trt8 to yield epoxyfarnesyl-DMOA methyl ester. Cyclization of epoxyfarnesyl-DMOA methyl ester by the terpene cyclase trt1 leads to a tetracycle intermediate which is in turn converted to preterretonin. Dehydrogenase trt9 comes next to transform preterretonin to preterrenoid. The FAD-dependent monooxygenase trt3 is then required for the C-hydroxylation at C16 of preterrenoid to yield terrenoid. The cytochrome P450 trt6 catalyzes three successive oxidations to transform terrenoid into an unstable intermediate, which then undergoes the D-ring expansion and unusual rearrangement of the methoxy group to afford the core skeleton of terretonin. Trt14 catalyzes the D-ring expansion of terretonin involving intramolecular methoxy rearrangement as well as the hydrolysis of the expanded D-ring and the methyl ester moiety. Finally, the nonheme iron-dependent dioxygenase trt7 accomplishes the last two oxidation reactions steps to complete the biosynthesis of terretonin. Terretonin C is produced via spontaneous decarboxylation of the terretonin precursor. Another shunt product of the terretonin biosynthesis is dihydrofarnesyl-DMOA, derived from epoxyfarnesyl-DMOA through hydrolysis of the epoxide. This chain is Cytochrome P450 monooxygenase trt6, found in Aspergillus terreus (strain NIH 2624 / FGSC A1156).